The sequence spans 472 residues: Aspartyl/glutamyl-tRNA(Asn/Gln) amidotransferase subunit B (472 aa).

Belongs to the GatB/GatE family. GatB subfamily. Heterotrimer of A, B and C subunits.

The enzyme catalyses L-glutamyl-tRNA(Gln) + L-glutamine + ATP + H2O = L-glutaminyl-tRNA(Gln) + L-glutamate + ADP + phosphate + H(+). It carries out the reaction L-aspartyl-tRNA(Asn) + L-glutamine + ATP + H2O = L-asparaginyl-tRNA(Asn) + L-glutamate + ADP + phosphate + 2 H(+). Allows the formation of correctly charged Asn-tRNA(Asn) or Gln-tRNA(Gln) through the transamidation of misacylated Asp-tRNA(Asn) or Glu-tRNA(Gln) in organisms which lack either or both of asparaginyl-tRNA or glutaminyl-tRNA synthetases. The reaction takes place in the presence of glutamine and ATP through an activated phospho-Asp-tRNA(Asn) or phospho-Glu-tRNA(Gln). The chain is Aspartyl/glutamyl-tRNA(Asn/Gln) amidotransferase subunit B from Mycoplasmopsis agalactiae (strain NCTC 10123 / CIP 59.7 / PG2) (Mycoplasma agalactiae).